Consider the following 608-residue polypeptide: ABC transporter ATP-binding protein RamB (608 aa).

5 helical membrane-spanning segments follow: residues 25-45, 66-86, 141-161, 166-186, and 253-273; these read GVLV…FLVG, LWLG…RGVF, GLVL…LGLL, ALLV…LVTL, and AALG…VEWL. One can recognise an ABC transmembrane type-1 domain in the interval 30-296; sequence LALWSLAESG…FTYLVQSLLP (267 aa). The segment at 321–362 is disordered; the sequence is GPEPEPEPEPEPEPEPELGSGLEPEPEPASEPESGPSTASAS. A compositionally biased stretch (acidic residues) spans 324 to 336; it reads PEPEPEPEPEPEP. Residues 351–362 are compositionally biased toward low complexity; it reads EPESGPSTASAS. The region spanning 376–605 is the ABC transporter domain; that stretch reads VELRSVTLSY…SPLYRDLTGH (230 aa). ATP is bound at residue 410-417; sequence GPSGIGKS.

The protein belongs to the ABC transporter superfamily.

Its subcellular location is the cell membrane. Probably involved in exporting SapB from the cell. Expression of the ram locus (ramA, ramB and ramR) induces rapid aerial mycelium formation in S.lividans. This Streptomyces coelicolor (strain ATCC BAA-471 / A3(2) / M145) protein is ABC transporter ATP-binding protein RamB.